Consider the following 142-residue polypeptide: Large ribosomal subunit protein uL11 (142 aa).

It belongs to the universal ribosomal protein uL11 family. In terms of assembly, part of the ribosomal stalk of the 50S ribosomal subunit. Interacts with L10 and the large rRNA to form the base of the stalk. L10 forms an elongated spine to which L12 dimers bind in a sequential fashion forming a multimeric L10(L12)X complex. Post-translationally, one or more lysine residues are methylated.

Its function is as follows. Forms part of the ribosomal stalk which helps the ribosome interact with GTP-bound translation factors. The sequence is that of Large ribosomal subunit protein uL11 from Mycobacteroides abscessus (strain ATCC 19977 / DSM 44196 / CCUG 20993 / CIP 104536 / JCM 13569 / NCTC 13031 / TMC 1543 / L948) (Mycobacterium abscessus).